The following is a 380-amino-acid chain: Beta sliding clamp (380 aa).

Belongs to the beta sliding clamp family. As to quaternary structure, forms a ring-shaped head-to-tail homodimer around DNA which binds and tethers DNA polymerases and other proteins to the DNA. The DNA replisome complex has a single clamp-loading complex (3 tau and 1 each of delta, delta', psi and chi subunits) which binds 3 Pol III cores (1 core on the leading strand and 2 on the lagging strand) each with a beta sliding clamp dimer. Additional proteins in the replisome are other copies of gamma, psi and chi, Ssb, DNA helicase and RNA primase.

The protein localises to the cytoplasm. Confers DNA tethering and processivity to DNA polymerases and other proteins. Acts as a clamp, forming a ring around DNA (a reaction catalyzed by the clamp-loading complex) which diffuses in an ATP-independent manner freely and bidirectionally along dsDNA. Initially characterized for its ability to contact the catalytic subunit of DNA polymerase III (Pol III), a complex, multichain enzyme responsible for most of the replicative synthesis in bacteria; Pol III exhibits 3'-5' exonuclease proofreading activity. The beta chain is required for initiation of replication as well as for processivity of DNA replication. The chain is Beta sliding clamp (dnaN) from Mycoplasma pneumoniae (strain ATCC 29342 / M129 / Subtype 1) (Mycoplasmoides pneumoniae).